Consider the following 256-residue polypeptide: Nickel import ATP-binding protein NikD (256 aa).

An ABC transporter domain is found at 6 to 245 (LEIRGLRIET…PASATARTLL (240 aa)). 38–45 (GASGSGKS) is an ATP binding site.

This sequence belongs to the ABC transporter superfamily. Nickel importer (TC 3.A.1.5.3) family. The complex is composed of two ATP-binding proteins (NikD and NikE), two transmembrane proteins (NikB and NikC) and a solute-binding protein (NikA).

It is found in the cell inner membrane. It catalyses the reaction Ni(2+)(out) + ATP + H2O = Ni(2+)(in) + ADP + phosphate + H(+). Part of the ABC transporter complex NikABCDE involved in nickel import. Responsible for energy coupling to the transport system. The protein is Nickel import ATP-binding protein NikD of Pseudomonas putida (strain ATCC 47054 / DSM 6125 / CFBP 8728 / NCIMB 11950 / KT2440).